An 863-amino-acid polypeptide reads, in one-letter code: Penicillin-binding protein 1A (863 aa).

Residues 1–28 (MTENRDNKTSQSEKTTQKKKKKKFKAFK) are Cytoplasmic-facing. The helical; Signal-anchor for type II membrane protein transmembrane segment at 29-49 (IILITFITLIVISLVTAIGIT) threads the bilayer. At 50 to 863 (LAIIKTSPDI…KPIIRPKKHF (814 aa)) the chain is on the extracellular side. The transglycosylase stretch occupies residues 71-248 (SKIYDDKGEL…PSVYYPYSRT (178 aa)). Glutamate 110 functions as the Proton donor; for transglycosylase activity in the catalytic mechanism. The segment at 392–674 (ASAVLTDYHT…AAALFGKIMN (283 aa)) is transpeptidase. The active-site Acyl-ester intermediate; for transpeptidase activity is the serine 431. A disordered region spans residues 774-863 (DDDMYVLPDK…KPIIRPKKHF (90 aa)). Polar residues predominate over residues 808 to 836 (EDATNEASTEPSPNTDTVPEDSTNNLDPT). Basic and acidic residues predominate over residues 837 to 846 (KNTEKKPSDK). Positions 847-863 (KNKKHVIKPIIRPKKHF) are enriched in basic residues.

This sequence in the N-terminal section; belongs to the glycosyltransferase 51 family. It in the C-terminal section; belongs to the transpeptidase family.

The protein resides in the cell membrane. The enzyme catalyses [GlcNAc-(1-&gt;4)-Mur2Ac(oyl-L-Ala-gamma-D-Glu-L-Lys-D-Ala-D-Ala)](n)-di-trans,octa-cis-undecaprenyl diphosphate + beta-D-GlcNAc-(1-&gt;4)-Mur2Ac(oyl-L-Ala-gamma-D-Glu-L-Lys-D-Ala-D-Ala)-di-trans,octa-cis-undecaprenyl diphosphate = [GlcNAc-(1-&gt;4)-Mur2Ac(oyl-L-Ala-gamma-D-Glu-L-Lys-D-Ala-D-Ala)](n+1)-di-trans,octa-cis-undecaprenyl diphosphate + di-trans,octa-cis-undecaprenyl diphosphate + H(+). It catalyses the reaction Preferential cleavage: (Ac)2-L-Lys-D-Ala-|-D-Ala. Also transpeptidation of peptidyl-alanyl moieties that are N-acyl substituents of D-alanine.. The protein operates within cell wall biogenesis; peptidoglycan biosynthesis. Functionally, cell wall formation. Synthesis of cross-linked peptidoglycan from the lipid intermediates. The enzyme has a penicillin-insensitive transglycosylase N-terminal domain (formation of linear glycan strands) and a penicillin-sensitive transpeptidase C-terminal domain (cross-linking of the peptide subunits). In Clostridium novyi (strain NT), this protein is Penicillin-binding protein 1A (pbpA).